A 296-amino-acid polypeptide reads, in one-letter code: MIQDSMQFAAVESGLRFYQAYDQSLSLWPIESEAFYVSTRFGKTHIIASGPKDAPSLILLHGGLFSSAMWYPNIAAWSSQFRTYAVDIIGDKNKSIPSAAMETRADFAEWMKDVFDSLGLETAHLAGLSLGGSHIVNFLLRAPERVERAVVISPAEAFISFHPDVYKYAAELTGARGAESYIKWITGDSYDLHPLLQRQIVAGVEWQDEQRSLKPTENGFPYVFTDQELKSIQVPVLLMFGEHEAMYHQQMAFERASVLVPGIQAEIVKNAGHLLSLEQPEYVNQRVLSFLCGGIK.

Residues S129, E244, and H273 each act as charge relay system in the active site.

Belongs to the AB hydrolase superfamily.

It is found in the cytoplasm. It carries out the reaction a carboxylic ester + H2O = an alcohol + a carboxylate + H(+). In terms of biological role, shows carboxylesterase activity in vitro. This chain is Carboxylesterase YbfK (ybfK), found in Bacillus subtilis (strain 168).